The primary structure comprises 510 residues: NAD(P)H-quinone oxidoreductase subunit 2 B, chloroplastic (510 aa).

14 helical membrane-spanning segments follow: residues 31–51 (FIFP…IDLT), 59–79 (WFYF…LFRW), 99–119 (IFQF…VEYI), 124–144 (MAIT…MFLC), 149–169 (LITI…LSGY), 184–204 (LLMG…LYGL), 229–249 (ISIA…LAPF), 261–281 (PTPV…ALAT), 295–315 (WHLL…LLAI), 323–343 (MLAY…IVGD), 354–374 (YMLF…LFGL), 395–415 (ALSL…AGFF), 418–438 (LYLF…IGLL), and 484–504 (MTVC…ILAI).

It belongs to the complex I subunit 2 family. As to quaternary structure, NDH is composed of at least 16 different subunits, 5 of which are encoded in the nucleus.

Its subcellular location is the plastid. It is found in the chloroplast thylakoid membrane. It carries out the reaction a plastoquinone + NADH + (n+1) H(+)(in) = a plastoquinol + NAD(+) + n H(+)(out). It catalyses the reaction a plastoquinone + NADPH + (n+1) H(+)(in) = a plastoquinol + NADP(+) + n H(+)(out). Its function is as follows. NDH shuttles electrons from NAD(P)H:plastoquinone, via FMN and iron-sulfur (Fe-S) centers, to quinones in the photosynthetic chain and possibly in a chloroplast respiratory chain. The immediate electron acceptor for the enzyme in this species is believed to be plastoquinone. Couples the redox reaction to proton translocation, and thus conserves the redox energy in a proton gradient. In Hordeum vulgare (Barley), this protein is NAD(P)H-quinone oxidoreductase subunit 2 B, chloroplastic.